The sequence spans 222 residues: uncharacterized protein (222 aa).

It belongs to the ycf73 family.

It localises to the plastid. Its subcellular location is the chloroplast. This is an uncharacterized protein from Oryza nivara (Indian wild rice).